A 296-amino-acid chain; its full sequence is tRNA (guanine(9)-N1)-methyltransferase (296 aa).

The segment at 1 to 33 is disordered; it reads MTPETNNDETLSRPKPRAALPPVPEGMSKSQWK. The SAM-dependent MTase TRM10-type domain maps to 85-274; sequence TPRVNVNQKD…SVLPARKLAE (190 aa). S-adenosyl-L-methionine-binding positions include 181–182, G201, 205–209, C213, L227, and 239–241; these read LT, DKNRH, and KVL. Catalysis depends on D205, which acts as the Proton acceptor. The tract at residues 277-296 is disordered; the sequence is DHAQESNSSSPAEEQDAQDI.

The protein belongs to the class IV-like SAM-binding methyltransferase superfamily. TRM10 family. As to quaternary structure, monomer.

The protein localises to the cytoplasm. Its subcellular location is the nucleus. The catalysed reaction is guanosine(9) in tRNA + S-adenosyl-L-methionine = N(1)-methylguanosine(9) in tRNA + S-adenosyl-L-homocysteine + H(+). S-adenosyl-L-methionine-dependent guanine N(1)-methyltransferase that catalyzes the formation of N(1)-methylguanine at position 9 (m1G9) in cytoplasmic tRNA. The sequence is that of tRNA (guanine(9)-N1)-methyltransferase from Eremothecium gossypii (strain ATCC 10895 / CBS 109.51 / FGSC 9923 / NRRL Y-1056) (Yeast).